The primary structure comprises 223 residues: uncharacterized protein (223 aa).

The next 5 helical transmembrane spans lie at 28–48 (LSNT…GLIT), 59–79 (LIVQ…ITLA), 88–108 (AFNQ…MFFI), 128–148 (IVGL…VWLS), and 176–196 (AWAI…YMIV).

It localises to the cell membrane. This is an uncharacterized protein from Mycoplasma pneumoniae (strain ATCC 29342 / M129 / Subtype 1) (Mycoplasmoides pneumoniae).